Here is a 182-residue protein sequence, read N- to C-terminus: Inorganic pyrophosphatase (182 aa).

Residues Lys-30, Arg-44, and Tyr-56 each coordinate substrate. Mg(2+)-binding residues include Asp-66, Asp-71, and Asp-103. Tyr-142 is a substrate binding site.

It belongs to the PPase family. As to quaternary structure, homohexamer. Requires Mg(2+) as cofactor.

It localises to the cytoplasm. It carries out the reaction diphosphate + H2O = 2 phosphate + H(+). Its function is as follows. Catalyzes the hydrolysis of inorganic pyrophosphate (PPi) forming two phosphate ions. This is Inorganic pyrophosphatase from Buchnera aphidicola subsp. Acyrthosiphon pisum (strain APS) (Acyrthosiphon pisum symbiotic bacterium).